Consider the following 418-residue polypeptide: Argininosuccinate synthase (418 aa).

ATP is bound by residues 14-22 and Ala42; that span reads AYSGGLDTS. Tyr94 and Ser99 together coordinate L-citrulline. Gly124 lines the ATP pocket. L-aspartate contacts are provided by Thr126, Asn130, and Asp131. Asn130 contributes to the L-citrulline binding site. Positions 134, 183, 192, 273, and 285 each coordinate L-citrulline.

It belongs to the argininosuccinate synthase family. Type 1 subfamily. As to quaternary structure, homotetramer.

Its subcellular location is the cytoplasm. The enzyme catalyses L-citrulline + L-aspartate + ATP = 2-(N(omega)-L-arginino)succinate + AMP + diphosphate + H(+). Its pathway is amino-acid biosynthesis; L-arginine biosynthesis; L-arginine from L-ornithine and carbamoyl phosphate: step 2/3. The chain is Argininosuccinate synthase from Colwellia psychrerythraea (strain 34H / ATCC BAA-681) (Vibrio psychroerythus).